A 375-amino-acid chain; its full sequence is Growth/differentiation factor 8 (375 aa).

The first 18 residues, 1-18 (MQKLQISVYIYLFMLIVA), serve as a signal peptide directing secretion. The propeptide occupies 19–266 (GPVDLNENSE…VTDTPKRSRR (248 aa)). Asn71 carries an N-linked (GlcNAc...) asparagine glycan. Intrachain disulfides connect Cys272–Cys282, Cys281–Cys340, Cys309–Cys372, and Cys313–Cys374.

It belongs to the TGF-beta family. Homodimer; disulfide-linked. Interacts with WFIKKN2, leading to inhibit its activity. Interacts with FSTL3. In terms of processing, synthesized as large precursor molecule that undergoes proteolytic cleavage to generate an N-terminal propeptide and a disulfide linked C-terminal dimer, which is the biologically active molecule. The circulating form consists of a latent complex of the C-terminal dimer and other proteins, including its propeptide, which maintain the C-terminal dimer in a latent, inactive state. Ligand activation requires additional cleavage of the prodomain by a tolloid-like metalloproteinase.

It is found in the secreted. Acts specifically as a negative regulator of skeletal muscle growth. This chain is Growth/differentiation factor 8 (MSTN), found in Lepus capensis (Brown hare).